The chain runs to 172 residues: uncharacterized protein (172 aa).

A Ferritin-like diiron domain is found at 1–148; it reads MANSQKVIDV…TIHDFFENGN (148 aa).

This is an uncharacterized protein from Ureaplasma urealyticum (Ureaplasma urealyticum biotype 2).